We begin with the raw amino-acid sequence, 239 residues long: Serine protease SplD (239 aa).

Residues 1–36 form the signal peptide; the sequence is MNKNIIIKSIAALTILTSITGVGTTVVDGIQQTAKA. Active-site charge relay system residues include His-75, Asp-114, and Ser-192.

This sequence belongs to the peptidase S1B family.

It localises to the secreted. In Staphylococcus aureus (strain COL), this protein is Serine protease SplD (splD).